We begin with the raw amino-acid sequence, 1770 residues long: Serine/threonine-protein kinase RIM15 (1770 aa).

Residues 334–358 (HSLSTFPQDNGNNNNNNNNNNNNNN) are disordered. Positions 343 to 358 (NGNNNNNNNNNNNNNN) are enriched in low complexity. Residues serine 380 and serine 476 each carry the phosphoserine modification. Disordered regions lie at residues 530-563 (TPTANDIRHPSPLPRSCSNTVMKLPTPRRKLDSN) and 583-694 (STIS…NSVL). Polar residues predominate over residues 583-601 (STISIDRDNNTNSRGSSMK). The segment covering 611–632 (SRTSNSERPSSSSSRLGIRSRS) has biased composition (low complexity). A compositionally biased stretch (basic and acidic residues) spans 637–660 (QKIEYSHVDNDDRTNEMLSRDKDS). Over residues 669–692 (TTITSSTQATTTGTKTNSNNSTNS) the composition is skewed to low complexity. The residue at position 704 (threonine 704) is a Phosphothreonine. Residues serine 709, serine 733, serine 736, and serine 737 each carry the phosphoserine modification. Position 747 is a phosphothreonine (threonine 747). Residues 794-1254 (YDILKPISKG…IQEIKDHPYF (461 aa)) enclose the Protein kinase domain. ATP contacts are provided by residues 800–808 (ISKGAYGSV) and lysine 823. Aspartate 918 (proton acceptor) is an active-site residue. Low complexity predominate over residues 970 to 980 (NNFTMNNNNSN). Positions 970 to 1032 (NNFTMNNNNS…MTPTPSTNTV (63 aa)) are disordered. A compositionally biased stretch (polar residues) spans 981-990 (HSQLSTPDSF). Residues 1014–1031 (YSSTSNSHSMTPTPSTNT) are compositionally biased toward low complexity. Phosphoserine is present on residues serine 1044, serine 1048, and serine 1064. Threonine 1075 carries the phosphothreonine; by PHO85 modification. The region spanning 1255-1320 (KNVDWDHVYD…NTDVSELSAA (66 aa)) is the AGC-kinase C-terminal domain. Over residues 1378-1391 (TGYITPNGTGTTTT) the composition is skewed to low complexity. The interval 1378–1403 (TGYITPNGTGTTTTSAKNSPNLKNLS) is disordered. Over residues 1392–1401 (SAKNSPNLKN) the composition is skewed to polar residues. Position 1421 is a phosphoserine (serine 1421). 2 disordered regions span residues 1448 to 1507 (KSEH…STFG) and 1519 to 1572 (FSTR…PANT). Residues 1463–1481 (SSASLMGSSSDGSVSTPGS) show a composition bias toward low complexity. Residues serine 1531, serine 1538, serine 1542, and serine 1565 each carry the phosphoserine modification. One can recognise a Response regulatory domain in the interval 1636-1750 (DVLVCEPIPI…ELKKLVAKYA (115 aa)). Serine 1764 bears the Phosphoserine mark.

Belongs to the protein kinase superfamily. Ser/Thr protein kinase family. Interacts with the cyclin-dependent kinase (CDK) PHO85 and IGO1. Autophosphorylated. Phosphorylation by PKA strongly inhibits kinase activity. Phosphorylation by cyclin-CDK PHO80-PHO85 under favorable growth condition causes inactivation of RIM15 by promoting its export to the cytoplasm.

The protein localises to the cytoplasm. It localises to the nucleus. It catalyses the reaction L-seryl-[protein] + ATP = O-phospho-L-seryl-[protein] + ADP + H(+). The catalysed reaction is L-threonyl-[protein] + ATP = O-phospho-L-threonyl-[protein] + ADP + H(+). Kinase activity is inhibited by phosphorylation by cAMP-dependent protein kinase (PKA). Protein kinase that positively regulates proper entry into stationary phase of cells under nutrient starvation conditions. Involved in glycogen and trehalose accumulation, derepression of stress-induced genes, induction of thermotolerance and starvation resistance, and proper G1 cell cycle arrest. Also involved in the activation of a meiotic genes activation pathway. Phosphorylates IGO1 and IGO2, both involved in the TORC1 control of gene expression and chronological life span. This Saccharomyces cerevisiae (strain ATCC 204508 / S288c) (Baker's yeast) protein is Serine/threonine-protein kinase RIM15 (RIM15).